The sequence spans 113 residues: Replication initiation control protein YabA (113 aa).

Zn(2+) contacts are provided by His-86, Cys-88, Cys-102, and Cys-105.

Belongs to the YabA family. Homotetramer. Interacts with both DnaA and DnaN, acting as a bridge between these two proteins. The cofactor is Zn(2+).

The protein resides in the cytoplasm. The protein localises to the nucleoid. Involved in control of chromosome replication initiation. Inhibits the cooperative binding of DnaA to the oriC region, thus negatively regulating initiation of chromosome replication. Inhibits the ability of DnaA-ATP to form a helix on DNA; does not disassemble preformed DnaA-DNA helices. Decreases the residence time of DnaA on the chromosome at its binding sites (oriC, replication forks and promoter-binding sites). Tethers DnaA to the replication machinery via the DNA polymerase beta sliding clamp subunit (dnaN). Associates with oriC and other DnaA targets on the chromosome in a DnaA-dependent manner. This is Replication initiation control protein YabA from Pediococcus pentosaceus (strain ATCC 25745 / CCUG 21536 / LMG 10740 / 183-1w).